The primary structure comprises 74 residues: Translation initiation factor IF-1 (74 aa).

The 73-residue stretch at 1–73 folds into the S1-like domain; that stretch reads MSNKEDIIKM…TKGRIVYRKK (73 aa).

This sequence belongs to the IF-1 family. As to quaternary structure, component of the 30S ribosomal translation pre-initiation complex which assembles on the 30S ribosome in the order IF-2 and IF-3, IF-1 and N-formylmethionyl-tRNA(fMet); mRNA recruitment can occur at any time during PIC assembly.

Its subcellular location is the cytoplasm. One of the essential components for the initiation of protein synthesis. Stabilizes the binding of IF-2 and IF-3 on the 30S subunit to which N-formylmethionyl-tRNA(fMet) subsequently binds. Helps modulate mRNA selection, yielding the 30S pre-initiation complex (PIC). Upon addition of the 50S ribosomal subunit IF-1, IF-2 and IF-3 are released leaving the mature 70S translation initiation complex. The polypeptide is Translation initiation factor IF-1 (Thermosipho melanesiensis (strain DSM 12029 / CIP 104789 / BI429)).